The sequence spans 276 residues: Rhomboid protease GlpG (276 aa).

6 consecutive transmembrane segments (helical) span residues 94–114, 142–162, 169–189, 192–212, 229–249, and 250–270; these read GPVTWIVMLACVVVYIAMSLI, IFMHFSLMHILFNLLWWWYLG, LGSGKLIVITVISALLSGYVQ, FSGPWFGGLSGVVYALMGYVW, LIIFALLWIVASWFDWFGMSM, and ANGAHIAGLIVGLAMAFVDTL. Ser-201 acts as the Nucleophile in catalysis. Residue His-254 is part of the active site.

It belongs to the peptidase S54 family.

The protein resides in the cell inner membrane. The enzyme catalyses Cleaves type-1 transmembrane domains using a catalytic dyad composed of serine and histidine that are contributed by different transmembrane domains.. Its function is as follows. Rhomboid-type serine protease that catalyzes intramembrane proteolysis. In Salmonella paratyphi A (strain ATCC 9150 / SARB42), this protein is Rhomboid protease GlpG.